Here is a 415-residue protein sequence, read N- to C-terminus: Serine hydroxymethyltransferase 1 (415 aa).

(6S)-5,6,7,8-tetrahydrofolate contacts are provided by residues Leu122 and 126–128 (GHL). Lys230 is subject to N6-(pyridoxal phosphate)lysine.

This sequence belongs to the SHMT family. In terms of assembly, homodimer. Pyridoxal 5'-phosphate serves as cofactor.

Its subcellular location is the cytoplasm. It catalyses the reaction (6R)-5,10-methylene-5,6,7,8-tetrahydrofolate + glycine + H2O = (6S)-5,6,7,8-tetrahydrofolate + L-serine. It participates in one-carbon metabolism; tetrahydrofolate interconversion. Its pathway is amino-acid biosynthesis; glycine biosynthesis; glycine from L-serine: step 1/1. Functionally, catalyzes the reversible interconversion of serine and glycine with tetrahydrofolate (THF) serving as the one-carbon carrier. This reaction serves as the major source of one-carbon groups required for the biosynthesis of purines, thymidylate, methionine, and other important biomolecules. Also exhibits THF-independent aldolase activity toward beta-hydroxyamino acids, producing glycine and aldehydes, via a retro-aldol mechanism. The protein is Serine hydroxymethyltransferase 1 of Ralstonia nicotianae (strain ATCC BAA-1114 / GMI1000) (Ralstonia solanacearum).